The chain runs to 937 residues: Proprotein convertase subtilisin/kexin type 6 (937 aa).

Positions 1-16 (MPPRAPPAPGPRPPPR) are enriched in pro residues. The segment at 1–22 (MPPRAPPAPGPRPPPRAAGRHG) is disordered. Residues 1-45 (MPPRAPPAPGPRPPPRAAGRHGLSPLAPRPWRWLLLLALPAVCSA) form the signal peptide. Residues 46 to 132 (LPPPRPVYTN…QQEVKRRVKR (87 aa)) constitute a propeptide that is removed on maturation. The 320-residue stretch at 149–468 (MWYMHCADKN…FGLVDAEALV (320 aa)) folds into the Peptidase S8 domain. Residues Asp186 and His227 each act as charge relay system in the active site. Asn240 is a glycosylation site (N-linked (GlcNAc...) asparagine). Ser401 acts as the Charge relay system in catalysis. A P/Homo B domain is found at 476-616 (AVPSQHMCVA…SLILYGTAEH (141 aa)). Residues 534 to 536 (RGD) carry the Cell attachment site motif. Residues 621 to 656 (FSSHQSRSRMLELSVPEQEPLKAEGPPPQAETPEEE) form a disordered region. 5 FU repeats span residues 660-707 (TGVC…GYFG), 711-758 (ARRC…GLYA), 762-806 (QRLC…GTYF), 810-855 (LIRC…GFYP), and 863-911 (HKVC…ETFC). Residues 680–898 (CLNCVHFSLG…GFTQLGTSCI (219 aa)) are CRM (Cys-rich motif). N-linked (GlcNAc...) asparagine glycans are attached at residues Asn882 and Asn900. The region spanning 899 to 937 (TNHTCSNADETFCEMVKSNRLCERKLFIQFCCRTCLLAG) is the PLAC domain.

It belongs to the peptidase S8 family. The precursor protein seems to exist in the reticulum endoplasmic as both a monomer and a dimer-sized complex whereas mature form exists only as a monomer, suggesting that propeptide cleavage affects its tertiary or quaternary structure. Interacts (immature form including the propeptide) with RCN3; probably involved in the maturation and the secretion of PCSK6. Ca(2+) is required as a cofactor. As to expression, high expression in the anterior pituitary and in several brain regions, the atrium, and the ventricle.

Its function is as follows. Serine endoprotease that processes various proproteins by cleavage at paired basic amino acids, recognizing the RXXX[KR]R consensus motif. Likely functions in the constitutive secretory pathway, with unique restricted distribution in both neuroendocrine and non-neuroendocrine tissues. This chain is Proprotein convertase subtilisin/kexin type 6 (Pcsk6), found in Rattus norvegicus (Rat).